Here is a 159-residue protein sequence, read N- to C-terminus: Large ribosomal subunit protein uL11 (159 aa).

It belongs to the universal ribosomal protein uL11 family. Part of the ribosomal stalk of the 50S ribosomal subunit. Interacts with L10 and the large rRNA to form the base of the stalk. L10 forms an elongated spine to which L12 dimers bind in a sequential fashion forming a multimeric L10(L12)X complex.

Forms part of the ribosomal stalk which helps the ribosome interact with GTP-bound translation factors. The chain is Large ribosomal subunit protein uL11 from Methanococcus maripaludis (strain C5 / ATCC BAA-1333).